Reading from the N-terminus, the 167-residue chain is uncharacterized protein (167 aa).

A coiled-coil region spans residues 28 to 59 (LTGIREELKADIDETRLIAESVLEEKEKKVVE).

This is an uncharacterized protein from Aquifex aeolicus (strain VF5).